Consider the following 61-residue polypeptide: Temporin-SN3 (61 aa).

The N-terminal stretch at 1 to 22 (MFTLKKTLLLLFFLGTINLSLC) is a signal peptide. A propeptide spans 23–44 (EEERNAEEERRDGDDEMDVEVK) (removed in mature form). Residue Lys-61 is modified to Lysine amide.

The protein belongs to the frog skin active peptide (FSAP) family. Temporin subfamily. As to expression, expressed by the skin glands.

It is found in the secreted. Functionally, antimicrobial peptide. Active against some Gram-positive and Gram-negative bacterial strains. Active against fungus C.glabrata 090902 but not against C.albicans ATCC 12231. Shows weak hemolytic activity against human erythrocytes. This is Temporin-SN3 from Sylvirana spinulosa (Fine-spined frog).